Here is a 245-residue protein sequence, read N- to C-terminus: Adenylate kinase (245 aa).

15 to 20 serves as a coordination point for ATP; that stretch reads GSGKGT. An NMP region spans residues 35–64; the sequence is SSGDLLRGAVSKDTPLSQEIKSYLDQGKLL. AMP contacts are provided by residues serine 36, arginine 41, 62-64, 103-106, and glutamine 110; these read KLL and GFPR. An LID region spans residues 143-176; that stretch reads SRYICPACQGIYNEQQGFSSCPKCSVELIRRSDD. Arginine 144 is an ATP binding site. Positions 147 and 150 each coordinate Zn(2+). An ATP-binding site is contributed by 153–154; the sequence is IY. Residues cysteine 163 and cysteine 166 each coordinate Zn(2+). Positions 173 and 184 each coordinate AMP. An ATP-binding site is contributed by alanine 212.

It belongs to the adenylate kinase family. In terms of assembly, monomer.

Its subcellular location is the cytoplasm. It catalyses the reaction AMP + ATP = 2 ADP. Its pathway is purine metabolism; AMP biosynthesis via salvage pathway; AMP from ADP: step 1/1. Functionally, catalyzes the reversible transfer of the terminal phosphate group between ATP and AMP. Plays an important role in cellular energy homeostasis and in adenine nucleotide metabolism. In Chlamydia trachomatis serovar L2 (strain ATCC VR-902B / DSM 19102 / 434/Bu), this protein is Adenylate kinase.